A 178-amino-acid chain; its full sequence is Large ribosomal subunit protein uL10 (178 aa).

The protein belongs to the universal ribosomal protein uL10 family. Part of the ribosomal stalk of the 50S ribosomal subunit. The N-terminus interacts with L11 and the large rRNA to form the base of the stalk. The C-terminus forms an elongated spine to which L12 dimers bind in a sequential fashion forming a multimeric L10(L12)X complex.

Functionally, forms part of the ribosomal stalk, playing a central role in the interaction of the ribosome with GTP-bound translation factors. This Leuconostoc mesenteroides subsp. mesenteroides (strain ATCC 8293 / DSM 20343 / BCRC 11652 / CCM 1803 / JCM 6124 / NCDO 523 / NBRC 100496 / NCIMB 8023 / NCTC 12954 / NRRL B-1118 / 37Y) protein is Large ribosomal subunit protein uL10.